The sequence spans 344 residues: Phenylalanine--tRNA ligase alpha subunit (344 aa).

Glu-269 is a Mg(2+) binding site.

It belongs to the class-II aminoacyl-tRNA synthetase family. Phe-tRNA synthetase alpha subunit type 1 subfamily. In terms of assembly, tetramer of two alpha and two beta subunits. The cofactor is Mg(2+).

The protein resides in the cytoplasm. The enzyme catalyses tRNA(Phe) + L-phenylalanine + ATP = L-phenylalanyl-tRNA(Phe) + AMP + diphosphate + H(+). The polypeptide is Phenylalanine--tRNA ligase alpha subunit (Ralstonia nicotianae (strain ATCC BAA-1114 / GMI1000) (Ralstonia solanacearum)).